A 376-amino-acid chain; its full sequence is Protein FAM199X (376 aa).

Residues 237–253 are compositionally biased toward basic and acidic residues; the sequence is YIKEHSPRQRSTRESWK. The segment at 237-350 is disordered; the sequence is YIKEHSPRQR…QRQARKERLS (114 aa). Residues 255 to 300 show a composition bias toward low complexity; sequence TSYSTASTSGVSGASVSSSSASMVSTASSTGSSGGNSASNSSANMS. Residues 318-337 show a composition bias toward basic residues; that stretch reads DSKKRSKQRKLQQKALRKRQ. A coiled-coil region spans residues 320–349; it reads KKRSKQRKLQQKALRKRQLKEQRQARKERL. Residues 338–349 are compositionally biased toward basic and acidic residues; the sequence is LKEQRQARKERL.

Belongs to the FAM199 family.

The sequence is that of Protein FAM199X (fam199x) from Xenopus tropicalis (Western clawed frog).